We begin with the raw amino-acid sequence, 297 residues long: Translational activator of cytochrome c oxidase 1 (297 aa).

The disordered stretch occupies residues arginine 20 to alanine 45. Positions proline 28–proline 39 are enriched in basic and acidic residues. Residues valine 191–arginine 227 are a coiled coil.

This sequence belongs to the TACO1 family.

The protein localises to the mitochondrion. Its function is as follows. Acts as a translational activator of mitochondrially-encoded cytochrome c oxidase 1. The polypeptide is Translational activator of cytochrome c oxidase 1 (TACO1) (Homo sapiens (Human)).